We begin with the raw amino-acid sequence, 387 residues long: MNVLLLLVLCTLAMGCGATSPPQPAARPSSLLSLDCNSSYVLDIANDILQDINRDRKDGYVLSLNRVSDAREHRQEAGLGSLFYFTLDVLETGCHVLSRTSWKNCEVRIFHESVYGQCKAIFYINKEKRIFYLPAYNCTLRPVSQSAIIMTCPDCPSTSPYDLSNPRFMETATESLAKYNSESPSKQYSLVKITKTSSQWVFGPAYFVEYLIKESPCVKSEGSSCALESPGSVPVGICHGSLGEPQGNQGKIISVTCSFFNSQAPTPRGENATVNQRPANPSKTEELQQQNTAPTNSPTKAVPKGSVQYLPDWDKKREGSQEKDPVETFPVQLDLTTNPQGESLDVSFLFQEPMEEKVVVLPFPSKEQRSAECPGPAQKGYPFILPS.

The N-terminal stretch at 1–18 (MNVLLLLVLCTLAMGCGA) is a signal peptide. Cystatin fetuin-B-type domains lie at 25 to 139 (AARP…YNCT) and 150 to 258 (MTCP…VTCS). A glycan (N-linked (GlcNAc...) asparagine) is linked at N37. 5 cysteine pairs are disulfide-bonded: C94–C105, C118–C138, C152–C155, C217–C225, and C238–C257. N-linked (GlcNAc...) asparagine glycosylation is present at N137. Residues 264-306 (APTPRGENATVNQRPANPSKTEELQQQNTAPTNSPTKAVPKGS) are disordered. A glycan (N-linked (GlcNAc...) asparagine) is linked at N271. The span at 272–299 (ATVNQRPANPSKTEELQQQNTAPTNSPT) shows a compositional bias: polar residues. T292 and T295 each carry an O-linked (GalNAc...) threonine glycan. The residue at position 320 (S320) is a Phosphoserine. The tract at residues 366-387 (KEQRSAECPGPAQKGYPFILPS) is disordered.

The protein belongs to the fetuin family. Liver and testis.

The protein resides in the secreted. Its function is as follows. Protease inhibitor required for egg fertilization. Required to prevent premature zona pellucida hardening before fertilization, probably by inhibiting the protease activity of ASTL, a protease that mediates the cleavage of ZP2 and triggers zona pellucida hardening. In Bos taurus (Bovine), this protein is Fetuin-B (FETUB).